The following is a 60-amino-acid chain: MTCCNQQSSQPKTTTNCAGNSCYKKTWSDHRGTIIERGCGCPQVKSGIKLECCHTNECNN.

4 disulfide bridges follow: C3/C22, C17/C39, C41/C52, and C53/C58.

It belongs to the three-finger toxin family. Short-chain subfamily. Type I alpha-neurotoxin sub-subfamily. Expressed by the venom gland.

Its subcellular location is the secreted. Binds to muscle nicotinic acetylcholine receptor (nAChR) and inhibit acetylcholine from binding to the receptor, thereby impairing neuromuscular transmission. This Hydrophis ornatus (Ornate reef seasnake) protein is Short neurotoxin 1.